The primary structure comprises 284 residues: NAD kinase (284 aa).

The active-site Proton acceptor is D61. NAD(+)-binding positions include 61–62, R66, 136–137, R147, K164, D166, and L201; these read DG and ND.

It belongs to the NAD kinase family. The cofactor is a divalent metal cation.

The protein resides in the cytoplasm. The catalysed reaction is NAD(+) + ATP = ADP + NADP(+) + H(+). Functionally, involved in the regulation of the intracellular balance of NAD and NADP, and is a key enzyme in the biosynthesis of NADP. Catalyzes specifically the phosphorylation on 2'-hydroxyl of the adenosine moiety of NAD to yield NADP. This is NAD kinase from Dehalococcoides mccartyi (strain CBDB1).